The following is a 401-amino-acid chain: Leucine aminopeptidase 1 (401 aa).

The first 18 residues, 1–18 (MKVAKASLLTILAHSVSA), serve as a signal peptide directing secretion. Positions 19 to 87 (RFLAEDEINR…GATRLRTKTK (69 aa)) are excised as a propeptide. An N-linked (GlcNAc...) asparagine glycan is attached at asparagine 179. Zn(2+)-binding residues include histidine 187, aspartate 206, glutamate 245, and aspartate 272. A disulfide bond links cysteine 321 and cysteine 325. Histidine 354 contributes to the Zn(2+) binding site.

This sequence belongs to the peptidase M28 family. M28E subfamily. As to quaternary structure, monomer. Requires Zn(2+) as cofactor.

The protein resides in the secreted. Its function is as follows. Extracellular aminopeptidase that allows assimilation of proteinaceous substrates. This is Leucine aminopeptidase 1 (LAP1) from Colletotrichum graminicola (strain M1.001 / M2 / FGSC 10212) (Maize anthracnose fungus).